The sequence spans 138 residues: Small ribosomal subunit protein uS12 (138 aa).

Residues K33 to P55 form a disordered region. D102 carries the 3-methylthioaspartic acid modification.

Belongs to the universal ribosomal protein uS12 family. In terms of assembly, part of the 30S ribosomal subunit. Contacts proteins S8 and S17. May interact with IF1 in the 30S initiation complex.

In terms of biological role, with S4 and S5 plays an important role in translational accuracy. Its function is as follows. Interacts with and stabilizes bases of the 16S rRNA that are involved in tRNA selection in the A site and with the mRNA backbone. Located at the interface of the 30S and 50S subunits, it traverses the body of the 30S subunit contacting proteins on the other side and probably holding the rRNA structure together. The combined cluster of proteins S8, S12 and S17 appears to hold together the shoulder and platform of the 30S subunit. The polypeptide is Small ribosomal subunit protein uS12 (Bacillus licheniformis (strain ATCC 14580 / DSM 13 / JCM 2505 / CCUG 7422 / NBRC 12200 / NCIMB 9375 / NCTC 10341 / NRRL NRS-1264 / Gibson 46)).